Consider the following 383-residue polypeptide: Anhydro-N-acetylmuramic acid kinase (383 aa).

9–16 (GTSLDGID) lines the ATP pocket.

It belongs to the anhydro-N-acetylmuramic acid kinase family.

It carries out the reaction 1,6-anhydro-N-acetyl-beta-muramate + ATP + H2O = N-acetyl-D-muramate 6-phosphate + ADP + H(+). It participates in amino-sugar metabolism; 1,6-anhydro-N-acetylmuramate degradation. It functions in the pathway cell wall biogenesis; peptidoglycan recycling. In terms of biological role, catalyzes the specific phosphorylation of 1,6-anhydro-N-acetylmuramic acid (anhMurNAc) with the simultaneous cleavage of the 1,6-anhydro ring, generating MurNAc-6-P. Is required for the utilization of anhMurNAc either imported from the medium or derived from its own cell wall murein, and thus plays a role in cell wall recycling. This is Anhydro-N-acetylmuramic acid kinase from Bacillus cereus (strain ATCC 10987 / NRS 248).